A 502-amino-acid chain; its full sequence is Lysine--tRNA ligase (502 aa).

The Mg(2+) site is built by Glu403 and Glu410.

This sequence belongs to the class-II aminoacyl-tRNA synthetase family. In terms of assembly, homodimer. Mg(2+) is required as a cofactor.

The protein localises to the cytoplasm. The catalysed reaction is tRNA(Lys) + L-lysine + ATP = L-lysyl-tRNA(Lys) + AMP + diphosphate. The chain is Lysine--tRNA ligase from Parasynechococcus marenigrum (strain WH8102).